Here is a 120-residue protein sequence, read N- to C-terminus: Reprimo-like protein (120 aa).

A helical transmembrane segment spans residues 67 to 87 (VAQIAVLCVLSLTVVFGVFFL). A Phosphoserine modification is found at serine 109.

It belongs to the reprimo family.

The protein resides in the membrane. The sequence is that of Reprimo-like protein (RPRML) from Homo sapiens (Human).